Here is a 492-residue protein sequence, read N- to C-terminus: MRLSLSVLLCLGLALTLAQHNPHWWGNRNTIVHLFEWKWTDIADKCERFLGPRGYAGVQVSPANENIISEGRPWWERYQPISYKLVTRSGNELEFASMVKRCNDVGVRIYVDVLLNHMSADFEGLATGTGGSVAEPAKKSFPSVPYTADDFHETCEITDWNDRFQVQQCELVGLKDLNQNRDWVRTKLIEFLDHLIELGVAGFRVDAAKHMASEDLSFIYSSVRDLNINHGFPNNARPFIYQEVIDHGHETVTREEYNELGAVTEFRFSEEIGKAFRGNNALKWLQSWGTDWGFLSSGQALTFVDNHDNQRDSGDVLNYKSPKQYKMATAFHLAYPYGISRVMSSFGFDDRDQAPPQDAQEQLISPEFDADGGCTNGWICEHRWRQIYNMVEFKNTVRDTELTNWWDNGDNQIAFCRGSKGFIAINNNLYNLSETLQTCLPAGEYCDVISGSLVDGACTGKSVSVDGNGYGYIHIGTEDFDGVLAIHTDAKL.

An N-terminal signal peptide occupies residues methionine 1 to alanine 18. The residue at position 19 (glutamine 19) is a Pyrrolidone carboxylic acid. Cysteine 46 and cysteine 102 are oxidised to a cystine. Ca(2+) is bound by residues asparagine 116, glutamine 167, and aspartate 176. Cysteine 155 and cysteine 169 are oxidised to a cystine. Arginine 204 contacts chloride. Aspartate 206 serves as the catalytic Nucleophile. Residue histidine 210 coordinates Ca(2+). The Proton donor role is filled by glutamate 243. Asparagine 306 and arginine 341 together coordinate chloride. Disulfide bonds link cysteine 374-cysteine 380, cysteine 416-cysteine 439, and cysteine 446-cysteine 458.

Belongs to the glycosyl hydrolase 13 family. In terms of assembly, monomer. It depends on Ca(2+) as a cofactor. Chloride serves as cofactor.

The protein resides in the secreted. It carries out the reaction Endohydrolysis of (1-&gt;4)-alpha-D-glucosidic linkages in polysaccharides containing three or more (1-&gt;4)-alpha-linked D-glucose units.. This chain is Alpha-amylase-related protein (Amyrel), found in Drosophila willistoni (Fruit fly).